A 498-amino-acid polypeptide reads, in one-letter code: Polygalacturonan/rhamnogalacturonan-binding protein YtcQ (498 aa).

Positions 1–22 are cleaved as a signal peptide; it reads MGNKWRVLLIVLVLALGGVLAG. Cys-23 carries N-palmitoyl cysteine lipidation. The S-diacylglycerol cysteine moiety is linked to residue Cys-23.

This sequence belongs to the bacterial solute-binding protein 1 family. In terms of assembly, the complex is probably composed of two ATP-binding proteins (MsmX), two transmembrane proteins (YtcP and YteP) and a solute-binding protein (YtcQ).

It is found in the cell membrane. Involved in pectin degradation. Part of the ABC transporter complex YtcQP-YteP involved in the uptake of polygalacturonan and rhamnogalacturonan type I. This Bacillus subtilis (strain 168) protein is Polygalacturonan/rhamnogalacturonan-binding protein YtcQ (ytcQ).